Reading from the N-terminus, the 845-residue chain is Protein kintoun (845 aa).

The segment covering 362-382 (SKEQAQMHETLRHFSREDSGV) has biased composition (basic and acidic residues). Disordered regions lie at residues 362-420 (SKEQ…PVRH), 575-691 (QALK…SMSD), and 773-845 (AQHR…EMDD). S380 bears the Phosphoserine mark. A compositionally biased stretch (acidic residues) spans 391 to 400 (PVEEDPDGEL). The segment covering 584-593 (GTKEEEKENQ) has biased composition (basic and acidic residues). Positions 611–622 (KPGKKQRKRNKK) are enriched in basic residues. Positions 640-671 (LTKNSELQPKSTFNLPQRKQRSYSECNDSTGG) are enriched in polar residues. Residue S779 is modified to Phosphoserine. Residues 794 to 804 (LKQQENQSRNC) are compositionally biased toward polar residues.

This sequence belongs to the PIH1 family. Kintoun subfamily. As to quaternary structure, interacts with Pp1alpha-96A, Pp1-87B, Pp1-13C and flw.

Its subcellular location is the cytoplasm. Its function is as follows. Required for cytoplasmic pre-assembly of axonemal dyneins, thereby playing a central role in motility in cilia and flagella. Involved in pre-assembly of dynein arm complexes in the cytoplasm before intraflagellar transport loads them for the ciliary compartment. The polypeptide is Protein kintoun (Drosophila erecta (Fruit fly)).